A 343-amino-acid polypeptide reads, in one-letter code: GDSL esterase/lipase EXL4 (343 aa).

Residues 1 to 21 form the signal peptide; it reads MCSKITLVLTLFSSYFISTDA. The N-linked (GlcNAc...) asparagine glycan is linked to N23. Residue S35 is the Nucleophile of the active site. Active-site residues include D318 and H321.

This sequence belongs to the 'GDSL' lipolytic enzyme family. As to expression, flower buds and pollen.

The protein resides in the secreted. It is found in the extracellular space. The protein localises to the extracellular matrix. It localises to the pollen coat. Its function is as follows. Required for the formation of pollen coats and male fertility. In Arabidopsis thaliana (Mouse-ear cress), this protein is GDSL esterase/lipase EXL4 (EXL4).